We begin with the raw amino-acid sequence, 172 residues long: Large ribosomal subunit protein uL10 (172 aa).

Belongs to the universal ribosomal protein uL10 family. Part of the ribosomal stalk of the 50S ribosomal subunit. The N-terminus interacts with L11 and the large rRNA to form the base of the stalk. The C-terminus forms an elongated spine to which L12 dimers bind in a sequential fashion forming a multimeric L10(L12)X complex.

In terms of biological role, forms part of the ribosomal stalk, playing a central role in the interaction of the ribosome with GTP-bound translation factors. The sequence is that of Large ribosomal subunit protein uL10 from Rhizobium etli (strain CIAT 652).